The primary structure comprises 360 residues: Phospho-N-acetylmuramoyl-pentapeptide-transferase (360 aa).

10 consecutive transmembrane segments (helical) span residues 25 to 45 (RGIL…PWMI), 73 to 93 (TMGG…WADL), 97 to 117 (YVWV…VDDY), 142 to 162 (IGAA…TLIV), 167 to 187 (SVEI…IVGS), 199 to 219 (GLAI…CYLS), 236 to 256 (AGEL…FLWF), 263 to 283 (VFMG…IAVI), 288 to 308 (IVLF…MIQV), and 338 to 358 (VIVR…ATLK).

Belongs to the glycosyltransferase 4 family. MraY subfamily. It depends on Mg(2+) as a cofactor.

The protein resides in the cell inner membrane. The enzyme catalyses UDP-N-acetyl-alpha-D-muramoyl-L-alanyl-gamma-D-glutamyl-meso-2,6-diaminopimeloyl-D-alanyl-D-alanine + di-trans,octa-cis-undecaprenyl phosphate = di-trans,octa-cis-undecaprenyl diphospho-N-acetyl-alpha-D-muramoyl-L-alanyl-D-glutamyl-meso-2,6-diaminopimeloyl-D-alanyl-D-alanine + UMP. It participates in cell wall biogenesis; peptidoglycan biosynthesis. Its function is as follows. Catalyzes the initial step of the lipid cycle reactions in the biosynthesis of the cell wall peptidoglycan: transfers peptidoglycan precursor phospho-MurNAc-pentapeptide from UDP-MurNAc-pentapeptide onto the lipid carrier undecaprenyl phosphate, yielding undecaprenyl-pyrophosphoryl-MurNAc-pentapeptide, known as lipid I. In Pseudomonas aeruginosa (strain LESB58), this protein is Phospho-N-acetylmuramoyl-pentapeptide-transferase.